The primary structure comprises 282 residues: Small ribosomal subunit protein uS2 (282 aa).

Residues 245-265 (AEEAVEELPLPTGEAQDEASS) are disordered.

Belongs to the universal ribosomal protein uS2 family.

This is Small ribosomal subunit protein uS2 from Chlamydia trachomatis serovar A (strain ATCC VR-571B / DSM 19440 / HAR-13).